The sequence spans 201 residues: Probable quinol oxidase subunit 3 (201 aa).

A run of 5 helical transmembrane segments spans residues 20 to 40, 62 to 82, 91 to 111, 133 to 153, and 180 to 200; these read LGFWVFLTAEFSLFGTLFATL, LVLIMTFALLISSYTCGIAIY, LMLIWMIITVLLGMVFVGFEI, FFILLGTHGAHVSLGIVWIIC, and FLDVVWIFIFTAVYMIGMVFS.

The protein belongs to the cytochrome c oxidase subunit 3 family.

It is found in the cell membrane. The enzyme catalyses 2 a quinol + O2 = 2 a quinone + 2 H2O. Functionally, catalyzes quinol oxidation with the concomitant reduction of oxygen to water. This chain is Probable quinol oxidase subunit 3 (qoxC), found in Staphylococcus saprophyticus subsp. saprophyticus (strain ATCC 15305 / DSM 20229 / NCIMB 8711 / NCTC 7292 / S-41).